The sequence spans 329 residues: MVQDIKRAEIALDFKNKPVFFLVGSTGIGKTAIAHRIADEIGLSLLSIDSMQVYRKLDIGTAKPSLSERIRYRYGGIDLVDWKDSFNAFLFVQQACHYLAKEWENRRGVLAVGGCGLYFRAMTRGLCNAPPANLQLRTELEKMDRITLLERLTRIDPSAVAWVDCSNPRRIIRAIEVKETSGISLIEWQKKTTLPLVTPFLAFWIDRPQPEAEIRLRRRIKKMFERGWEEETLMLIEEGGMEAVEKCKAIGYKLIGQFLLQKRKNREELEEAIYRQQHGYAKRQKTWFKKEPSLCYYLLKNPEEEYRFIKSCIEKIAFFIRRNHQDFLY.

Residue 24–31 (GSTGIGKT) participates in ATP binding. 26-31 (TGIGKT) is a substrate binding site. Residues 49-52 (DSMQ) are interaction with substrate tRNA.

The protein belongs to the IPP transferase family. As to quaternary structure, monomer. Mg(2+) is required as a cofactor.

It catalyses the reaction adenosine(37) in tRNA + dimethylallyl diphosphate = N(6)-dimethylallyladenosine(37) in tRNA + diphosphate. Functionally, catalyzes the transfer of a dimethylallyl group onto the adenine at position 37 in tRNAs that read codons beginning with uridine, leading to the formation of N6-(dimethylallyl)adenosine (i(6)A). This Methylacidiphilum infernorum (isolate V4) (Methylokorus infernorum (strain V4)) protein is tRNA dimethylallyltransferase.